Consider the following 248-residue polypeptide: Mannose-binding protein C (248 aa).

The signal sequence occupies residues 1-20 (MSLFPSLPLLLLSMVAASYS). Residues 42–99 (GINGFPGKDGRDGTKGEKGEPGQGLRGLQGPPGKLGPPGNPGPSGSPGAKGQKGDPGA) form the Collagen-like domain. The tract at residues 43-112 (INGFPGKDGR…CDSSLANPER (70 aa)) is disordered. Proline 47 carries the 4-hydroxyproline modification. Over residues 49–61 (KDGRDGTKGEKGE) the composition is skewed to basic and acidic residues. Residues proline 73, proline 79, proline 82, and proline 88 each carry the 4-hydroxyproline modification. Positions 112 to 130 (RKTLQTEINRIKKWVTFSL) form a coiled coil. Residues 134-245 (VGKKLFLTNG…CSSSHLVICE (112 aa)) enclose the C-type lectin domain. Cystine bridges form between cysteine 155/cysteine 244 and cysteine 222/cysteine 236.

As to quaternary structure, oligomeric complex of 3 or more homotrimers. Interacts with MASP1 and MASP2. Interacts with MEP1A and MEP1B and may inhibit their catalytic activity. Hydroxylation on proline residues within the sequence motif, GXPG, is most likely to be 4-hydroxy as this fits the requirement for 4-hydroxylation in vertebrates.

The protein localises to the secreted. Calcium-dependent lectin involved in innate immune defense. Binds mannose, fucose and N-acetylglucosamine on different microorganisms and activates the lectin complement pathway. Binds to late apoptotic cells, as well as to apoptotic blebs and to necrotic cells, but not to early apoptotic cells, facilitating their uptake by macrophages. This Callithrix jacchus (White-tufted-ear marmoset) protein is Mannose-binding protein C (MBL2).